Consider the following 459-residue polypeptide: MSPQTETKASVGFKAGVKDYKLTYYTPEYETKDTDILAAFRVTPQPGVPPEEAGAAVAAESSTGTWTTVWTDGLTSLDRYKGRCYHIEPVAGEENQYIAYVAYPLDLFEEGSVTNMFTSIVGXVFGFKALRALRLEDLRIPPAYVKTFQGPPHGIQVERDKLNKXGRPLLGCTIKPKLGLSAKNYGRAVYECLRGGLDFTKDDENVNSQPFMRWRDRFLFCAEALFKAQAETGEIKGHYLNATAGTCEEMIKRAVFARELGVPIVMHDYLTGGFTANTSLAHYCRDNGLLLHIHRAMHAVIDRQKNHGIHFRVLAKALRMSGGDHIHAGTVVGKLEGERDITLGFVDLLRDDFIEKDRSRGIYFTQDWVSLPGVLPVASGGIHVWHMPALTEIFGDDSVLQFGGGTIGHPWGNAPGAVAGRVALEACVQARNEGRDLAREGNAIILEASKWSPELAAAC.

Residues 1–2 (MS) constitute a propeptide that is removed on maturation. Pro-3 carries the N-acetylproline modification. Lys-14 bears the N6,N6,N6-trimethyllysine mark. Residues Xaa-123 and Thr-173 each coordinate substrate. Lys-175 serves as the catalytic Proton acceptor. Residue Lys-177 coordinates substrate. Positions 201, 203, and 204 each coordinate Mg(2+). Position 201 is an N6-carboxylysine (Lys-201). His-294 acts as the Proton acceptor in catalysis. Substrate is bound by residues Arg-295, His-327, and Ser-379.

The protein belongs to the RuBisCO large chain family. Type I subfamily. In terms of assembly, heterohexadecamer of 8 large chains and 8 small chains; disulfide-linked. The disulfide link is formed within the large subunit homodimers. The cofactor is Mg(2+). In terms of processing, the disulfide bond which can form in the large chain dimeric partners within the hexadecamer appears to be associated with oxidative stress and protein turnover.

Its subcellular location is the plastid. It is found in the chloroplast. The catalysed reaction is 2 (2R)-3-phosphoglycerate + 2 H(+) = D-ribulose 1,5-bisphosphate + CO2 + H2O. The enzyme catalyses D-ribulose 1,5-bisphosphate + O2 = 2-phosphoglycolate + (2R)-3-phosphoglycerate + 2 H(+). RuBisCO catalyzes two reactions: the carboxylation of D-ribulose 1,5-bisphosphate, the primary event in carbon dioxide fixation, as well as the oxidative fragmentation of the pentose substrate in the photorespiration process. Both reactions occur simultaneously and in competition at the same active site. The polypeptide is Ribulose bisphosphate carboxylase large chain (Corynocarpus laevigatus (New Zealand laurel)).